The chain runs to 86 residues: Large ribosomal subunit protein bL31B (86 aa).

Belongs to the bacterial ribosomal protein bL31 family. Type B subfamily. Part of the 50S ribosomal subunit.

In Yersinia pseudotuberculosis serotype O:1b (strain IP 31758), this protein is Large ribosomal subunit protein bL31B.